Here is a 495-residue protein sequence, read N- to C-terminus: MTGNLVTKNSLTPDVRNGIDFKIADLSLADFGRKELRIAEHEMPGLMSLRREYAEVQPLKGARISGSLHMTVQTAVLIETLTALGAEVRWASCNIFSTQDHAAAAVVVGPHGTPDEPKGVPVFAWKGETLEEYWWAAEQMLTWPDPDKPANMILDDGGDATMLVLRGMQYEKAGVVPPAEEDDPAEWKIFLNLLRTRFETDKDKWTKIAESVKGVTEETTTGVLRLYQFAAAGDLAFPAINVNDSVTKSKFDNKYGTRHSLIDGINRGTDALIGGKKVLICGYGDVGKGCAEAMKGQGARVSVTEIDPINALQAMMEGFDVVTVEEAIGDADIVVTATGNKDIIMLEHIKAMKDHAILGNIGHFDNEIDMAGLERSGATRVNVKPQVDLWTFGDTGRSIIVLSEGRLLNLGNATGHPSFVMSNSFANQTIAQIELWTKNDEYDNEVYRLPKHLDEKVARIHVEALGGHLTKLTKEQAEYLGVDVEGPYKPDHYRY.

Residues Thr71, Asp156, and Glu218 each coordinate substrate. 219 to 221 (TTT) provides a ligand contact to NAD(+). Substrate contacts are provided by Lys248 and Asp252. NAD(+) contacts are provided by residues Asn253, 282-287 (GYGDVG), Glu305, Asn340, 361-363 (IGH), and Asn409.

It belongs to the adenosylhomocysteinase family. It depends on NAD(+) as a cofactor.

The protein localises to the cytoplasm. It catalyses the reaction S-adenosyl-L-homocysteine + H2O = L-homocysteine + adenosine. It participates in amino-acid biosynthesis; L-homocysteine biosynthesis; L-homocysteine from S-adenosyl-L-homocysteine: step 1/1. May play a key role in the regulation of the intracellular concentration of adenosylhomocysteine. This is Adenosylhomocysteinase from Mycobacterium bovis (strain ATCC BAA-935 / AF2122/97).